Consider the following 184-residue polypeptide: Inosine triphosphate pyrophosphatase (184 aa).

10–15 (TGNVKK) provides a ligand contact to ITP. Residue Glu37 coordinates Mg(2+). ITP contacts are provided by residues Lys49, 65-66 (DT), Lys82, 141-144 (FGWD), Lys164, and 169-170 (HR).

It belongs to the HAM1 NTPase family. Homodimer. The cofactor is Mg(2+). Mn(2+) serves as cofactor.

It localises to the cytoplasm. It carries out the reaction ITP + H2O = IMP + diphosphate + H(+). The enzyme catalyses dITP + H2O = dIMP + diphosphate + H(+). The catalysed reaction is XTP + H2O = XMP + diphosphate + H(+). Its function is as follows. Pyrophosphatase that hydrolyzes non-canonical purine nucleotides such as inosine triphosphate (ITP), deoxyinosine triphosphate (dITP) or xanthosine 5'-triphosphate (XTP) to their respective monophosphate derivatives. The enzyme does not distinguish between the deoxy- and ribose forms. Probably excludes non-canonical purines from RNA and DNA precursor pools, thus preventing their incorporation into RNA and DNA and avoiding chromosomal lesions. This Caenorhabditis elegans protein is Inosine triphosphate pyrophosphatase.